The following is a 128-amino-acid chain: Small ribosomal subunit protein uS10 (128 aa).

This sequence belongs to the universal ribosomal protein uS10 family.

This chain is Small ribosomal subunit protein uS10 (RPS20), found in Oryza sativa subsp. japonica (Rice).